The chain runs to 78 residues: Metallothionein-like protein type 2 (78 aa).

It belongs to the metallothionein superfamily. Type 15 family.

Metallothioneins have a high content of cysteine residues that bind various heavy metals. This is Metallothionein-like protein type 2 from Actinidia deliciosa (Kiwi).